The following is a 234-amino-acid chain: ATP synthase subunit a 1 (234 aa).

Helical transmembrane passes span 29-49 (FLVH…VALL), 90-110 (LIAT…IPGF), 116-136 (NLNT…VVGV), 147-167 (FVGP…IGHL), 186-206 (IVLV…MMLM), and 207-227 (GILV…IYIA).

This sequence belongs to the ATPase A chain family. F-type ATPases have 2 components, CF(1) - the catalytic core - and CF(0) - the membrane proton channel. CF(1) has five subunits: alpha(3), beta(3), gamma(1), delta(1), epsilon(1). CF(0) has three main subunits: a(1), b(2) and c(9-12). The alpha and beta chains form an alternating ring which encloses part of the gamma chain. CF(1) is attached to CF(0) by a central stalk formed by the gamma and epsilon chains, while a peripheral stalk is formed by the delta and b chains.

The protein resides in the cell inner membrane. Functionally, key component of the proton channel; it plays a direct role in the translocation of protons across the membrane. The polypeptide is ATP synthase subunit a 1 (Syntrophotalea carbinolica (strain DSM 2380 / NBRC 103641 / GraBd1) (Pelobacter carbinolicus)).